A 132-amino-acid chain; its full sequence is Prefoldin subunit alpha (132 aa).

It belongs to the prefoldin subunit alpha family. In terms of assembly, heterohexamer of two alpha and four beta subunits.

Its subcellular location is the cytoplasm. Its function is as follows. Molecular chaperone capable of stabilizing a range of proteins. Seems to fulfill an ATP-independent, HSP70-like function in archaeal de novo protein folding. The chain is Prefoldin subunit alpha from Pyrobaculum islandicum (strain DSM 4184 / JCM 9189 / GEO3).